Reading from the N-terminus, the 214-residue chain is Small ribosomal subunit protein uS3c (214 aa).

The region spanning 39-111 (IRTYIHTISK…QLTINVLEVE (73 aa)) is the KH type-2 domain.

It belongs to the universal ribosomal protein uS3 family. In terms of assembly, part of the 30S ribosomal subunit.

It is found in the plastid. The protein resides in the chloroplast. This Phaeodactylum tricornutum (strain CCAP 1055/1) protein is Small ribosomal subunit protein uS3c (rps3).